The primary structure comprises 1085 residues: Toxin VasX (1085 aa).

The interval 1 to 20 (MSNPNQAAKTGQTNDAQNPA) is disordered. The next 4 membrane-spanning stretches (helical) occupy residues 753 to 773 (ALGE…AISA), 813 to 833 (IALV…ESWG), 860 to 880 (IIFY…PSIA), and 884 to 904 (AGWM…GVIL).

The protein localises to the secreted. Its subcellular location is the host membrane. Toxin secreted by the type VI (T6SS) secretion system that acts on prokaryotic target cells. Acts in conjunction with VasW, an accessory protein to VasX, to compromise the inner membrane of prokaryotic target cells. This Vibrio cholerae serotype O1 (strain ATCC 39315 / El Tor Inaba N16961) protein is Toxin VasX.